A 103-amino-acid polypeptide reads, in one-letter code: Histone H4 type VIII (103 aa).

Over residues 1-14 (MSGRGKGGKGLGKG) the composition is skewed to gly residues. A disordered region spans residues 1 to 20 (MSGRGKGGKGLGKGGAKRHR). S2 bears the N-acetylserine mark. The residue at position 2 (S2) is a Phosphoserine. R4 carries the post-translational modification Asymmetric dimethylarginine; by PRMT1; alternate. At R4 the chain carries Citrulline; alternate. R4 bears the Omega-N-methylarginine; by PRMT1; alternate mark. Position 4 is a symmetric dimethylarginine; by PRMT5 and PRMT7; alternate (R4). K6, K9, K13, and K17 each carry N6-(2-hydroxyisobutyryl)lysine; alternate. K6 is subject to N6-acetyl-N6-methyllysine; alternate. Residues K6, K9, K13, and K17 each carry the N6-acetyllysine modification. An N6-butyryllysine; alternate mark is found at K6, K9, K13, and K17. K6 is subject to N6-glutaryllysine; alternate. Residues K6, K9, K13, and K17 each carry the N6-lactoyllysine; alternate modification. N6-propionyllysine; alternate is present on K9. The residue at position 13 (K13) is an N6-acetyl-N6-methyllysine; alternate. K13 bears the N6-glutaryllysine; alternate mark. The residue at position 13 (K13) is an N6-methyllysine; alternate. Residue K17 is modified to N6-propionyllysine; alternate. Residue K21 is modified to N6-methyllysine; alternate. K21 is modified (N6,N6,N6-trimethyllysine; alternate). Residue K21 is modified to N6,N6-dimethyllysine; alternate. An N6-(2-hydroxyisobutyryl)lysine; alternate mark is found at K32 and K45. The residue at position 32 (K32) is an N6-acetyllysine. N6-butyryllysine; alternate is present on residues K32 and K45. K32 bears the N6-glutaryllysine; alternate mark. K32 is subject to N6-lactoyllysine; alternate. 2 positions are modified to N6-propionyllysine; alternate: K32 and K45. At K32 the chain carries N6-succinyllysine; alternate. K32 is covalently cross-linked (Glycyl lysine isopeptide (Lys-Gly) (interchain with G-Cter in UFM1); alternate). S48 bears the Phosphoserine mark. Y52 carries the post-translational modification Phosphotyrosine. K60 is modified (N6-acetyllysine). An N6-glutaryllysine; alternate mark is found at K60, K78, and K80. An N6-(2-hydroxyisobutyryl)lysine modification is found at K60. 2 positions are modified to N6-(2-hydroxyisobutyryl)lysine; alternate: K78 and K80. 2 positions are modified to N6-butyryllysine; alternate: K78 and K80. K78 is subject to N6-lactoyllysine; alternate. K78 and K80 each carry N6-propionyllysine; alternate. At K78 the chain carries N6-succinyllysine. N6-acetyllysine is present on K80. Position 89 is a phosphotyrosine (Y89). K92 carries the post-translational modification N6-(2-hydroxyisobutyryl)lysine; alternate. K92 is modified (N6-butyryllysine; alternate). K92 is modified (N6-glutaryllysine; alternate). An N6-lactoyllysine; alternate modification is found at K92. K92 carries the N6-propionyllysine; alternate modification. K92 is modified (N6-succinyllysine; alternate). Position 92 is an N6-acetyllysine; alternate (K92). A Glycyl lysine isopeptide (Lys-Gly) (interchain with G-Cter in ubiquitin); alternate cross-link involves residue K92.

It belongs to the histone H4 family. The nucleosome is a histone octamer containing two molecules each of H2A, H2B, H3 and H4 assembled in one H3-H4 heterotetramer and two H2A-H2B heterodimers. The octamer wraps approximately 147 bp of DNA. Acetylation at Lys-6 (H4K5ac), Lys-9 (H4K8ac), Lys-13 (H4K12ac) and Lys-17 (H4K16ac) occurs in coding regions of the genome but not in heterochromatin. In terms of processing, citrullination at Arg-4 (H4R3ci) by PADI4 impairs methylation. Post-translationally, monomethylation and asymmetric dimethylation at Arg-4 (H4R3me1 and H4R3me2a, respectively) by PRMT1 favors acetylation at Lys-9 (H4K8ac) and Lys-13 (H4K12ac). Demethylation is performed by JMJD6. Symmetric dimethylation on Arg-4 (H4R3me2s) by the PRDM1/PRMT5 complex may play a crucial role in the germ-cell lineage. Monomethylated, dimethylated or trimethylated at Lys-21 (H4K20me1, H4K20me2, H4K20me3). Monomethylation is performed by KMT5A/SET8. Trimethylation is performed by KMT5B and KMT5C and induces gene silencing. Monomethylated at Lys-13 (H4K12me1) by N6AMT1; H4K12me1 modification is present at the promoters of numerous genes encoding cell cycle regulators. In terms of processing, acetyl-methylated at Lys-6 and Lys-13 (H4K5acme and H4K12acme, respectively), acetyl-methylation is an epigenetic mark of active chromatin associated with increased transcriptional initiation. Acetyl-methylation is formed by acetylation by EP300/p300 of lysine residues that are already monomethylated on the same side chain. H4K5acme and H4K12acme marks specifically bind BRD2. Post-translationally, ubiquitinated by the CUL4-DDB-RBX1 complex in response to ultraviolet irradiation. This may weaken the interaction between histones and DNA and facilitate DNA accessibility to repair proteins. Monoubiquitinated at Lys-92 of histone H4 (H4K91ub1) in response to DNA damage. The exact role of H4K91ub1 in DNA damage response is still unclear but it may function as a licensing signal for additional histone H4 post-translational modifications such as H4 Lys-21 methylation (H4K20me). Sumoylated, which is associated with transcriptional repression. In terms of processing, butyrylation of histones marks active promoters and competes with histone acetylation. Post-translationally, glutarylation at Lys-92 (H4K91glu) destabilizes nucleosomes by promoting dissociation of the H2A-H2B dimers from nucleosomes. Ufmylated; monofmylated by UFL1 at Lys-32 (H4K31Ufm1) in response to DNA damage. In terms of processing, lactylated in macrophages by EP300/P300 by using lactoyl-CoA directly derived from endogenous or exogenous lactate, leading to stimulates gene transcription. Delactylated by SIRT3 at Lys-17 (H4K16la).

Its subcellular location is the nucleus. It localises to the chromosome. Functionally, core component of nucleosome. Nucleosomes wrap and compact DNA into chromatin, limiting DNA accessibility to the cellular machineries which require DNA as a template. Histones thereby play a central role in transcription regulation, DNA repair, DNA replication and chromosomal stability. DNA accessibility is regulated via a complex set of post-translational modifications of histones, also called histone code, and nucleosome remodeling. This Gallus gallus (Chicken) protein is Histone H4 type VIII (H4-VIII).